The following is a 407-amino-acid chain: Phosphopentomutase (407 aa).

Residues Asp-10, Asp-306, His-311, Asp-347, His-348, and His-359 each coordinate Mn(2+).

Belongs to the phosphopentomutase family. Mn(2+) is required as a cofactor.

Its subcellular location is the cytoplasm. The catalysed reaction is 2-deoxy-alpha-D-ribose 1-phosphate = 2-deoxy-D-ribose 5-phosphate. It carries out the reaction alpha-D-ribose 1-phosphate = D-ribose 5-phosphate. It participates in carbohydrate degradation; 2-deoxy-D-ribose 1-phosphate degradation; D-glyceraldehyde 3-phosphate and acetaldehyde from 2-deoxy-alpha-D-ribose 1-phosphate: step 1/2. Isomerase that catalyzes the conversion of deoxy-ribose 1-phosphate (dRib-1-P) and ribose 1-phosphate (Rib-1-P) to deoxy-ribose 5-phosphate (dRib-5-P) and ribose 5-phosphate (Rib-5-P), respectively. The chain is Phosphopentomutase from Yersinia enterocolitica serotype O:8 / biotype 1B (strain NCTC 13174 / 8081).